A 357-amino-acid polypeptide reads, in one-letter code: MRPPPALALAGLCLLALPAAAASYFGLTGREVLTPFPGLGTAAAPAQGGAHLKQCDLLKLSRRQKQLCRREPGLAETLRDAAHLGLLECQFQFRHERWNCSLEGRMGLLKRGFKETAFLYAVSSAALTHTLARACSAGRMERCTCDDSPGLESRQAWQWGVCGDNLKYSTKFLSNFLGSKRGNKDLRARADAHNTHVGIKAVKSGLRTTCKCHGVSGSCAVRTCWKQLSPFRETGQVLKLRYDSAVKVSSATNEALGRLELWAPARQGSLTKGLAPRSGDLVYMEDSPSFCRPSKYSPGTAGRVCSREASCSSLCCGRGYDTQSRLVAFSCHCQVQWCCYVECQQCVQEELVYTCKH.

A signal peptide spans 1-22 (MRPPPALALAGLCLLALPAAAA). 11 disulfides stabilise this stretch: C89–C100, C135–C143, C145–C162, C210–C224, C212–C219, C291–C316, C305–C311, C315–C355, C331–C346, C333–C343, and C338–C339. The N-linked (GlcNAc...) asparagine glycan is linked to N99. The O-palmitoleoyl serine; by PORCN moiety is linked to residue S216.

It belongs to the Wnt family. As to quaternary structure, forms a soluble 1:1 complex with AFM; this prevents oligomerization and is required for prolonged biological activity. The complex with AFM may represent the physiological form in body fluids. Component of the Wnt-Fzd-LRP5-LRP6 signaling complex that contains a WNT protein, a FZD protein and LRP5 or LRP6. Interacts directly in the complex with LRP6. Interacts with PKD1 (via extracellular domain). In terms of processing, palmitoleoylation is required for efficient binding to frizzled receptors. Depalmitoleoylation leads to Wnt signaling pathway inhibition. As to expression, moderately expressed in fetal kidney and adult kidney. Also found in brain.

The protein resides in the secreted. The protein localises to the extracellular space. It localises to the extracellular matrix. Its function is as follows. Ligand for members of the frizzled family of seven transmembrane receptors. Functions in the canonical Wnt/beta-catenin signaling pathway. Required for normal embryonic kidney development, and for normal development of the urogenital tract, including uterus and part of the oviduct and the upper vagina in females, and epididymis and vas deferens in males. Activates a signaling cascade in the metanephric mesenchyme that induces tubulogenesis. Acts upstream of WNT4 in the signaling pathways that mediate development of kidney tubules and the Muellerian ducts. Plays a role in cranofacial development and is required for normal fusion of the palate during embryonic development. This chain is Protein Wnt-9b (WNT9B), found in Homo sapiens (Human).